A 170-amino-acid polypeptide reads, in one-letter code: Ribulose bisphosphate carboxylase small subunit, chloroplastic (170 aa).

2 consecutive transit peptides (chloroplast) follow at residues 1–46 (MAPT…GRIR) and 1–47 (MAPT…RIRC).

The protein belongs to the RuBisCO small chain family. Heterohexadecamer of 8 large and 8 small subunits.

It localises to the plastid. The protein resides in the chloroplast. Functionally, ruBisCO catalyzes two reactions: the carboxylation of D-ribulose 1,5-bisphosphate, the primary event in carbon dioxide fixation, as well as the oxidative fragmentation of the pentose substrate. Both reactions occur simultaneously and in competition at the same active site. Although the small subunit is not catalytic it is essential for maximal activity. This chain is Ribulose bisphosphate carboxylase small subunit, chloroplastic, found in Zea mays (Maize).